A 141-amino-acid polypeptide reads, in one-letter code: Nucleoside triphosphatase NudI (141 aa).

A Nudix hydrolase domain is found at 1-141; the sequence is MRQRTIVCPL…RKTLSLKGLL (141 aa). Positions 38–59 match the Nudix box motif; it reads GGVEPGERIEDALRREIREELG.

Belongs to the Nudix hydrolase family. NudI subfamily. In terms of assembly, monomer. Mg(2+) is required as a cofactor.

The catalysed reaction is a ribonucleoside 5'-triphosphate + H2O = a ribonucleoside 5'-phosphate + diphosphate + H(+). It catalyses the reaction a 2'-deoxyribonucleoside 5'-triphosphate + H2O = a 2'-deoxyribonucleoside 5'-phosphate + diphosphate + H(+). The enzyme catalyses dUTP + H2O = dUMP + diphosphate + H(+). It carries out the reaction dTTP + H2O = dTMP + diphosphate + H(+). The catalysed reaction is dCTP + H2O = dCMP + diphosphate + H(+). Functionally, catalyzes the hydrolysis of nucleoside triphosphates, with a preference for pyrimidine deoxynucleoside triphosphates (dUTP, dTTP and dCTP). The chain is Nucleoside triphosphatase NudI from Escherichia fergusonii (strain ATCC 35469 / DSM 13698 / CCUG 18766 / IAM 14443 / JCM 21226 / LMG 7866 / NBRC 102419 / NCTC 12128 / CDC 0568-73).